Reading from the N-terminus, the 209-residue chain is Thymidylate kinase (209 aa).

ATP is bound at residue Gly10–Ser17.

Belongs to the thymidylate kinase family.

It carries out the reaction dTMP + ATP = dTDP + ADP. In terms of biological role, phosphorylation of dTMP to form dTDP in both de novo and salvage pathways of dTTP synthesis. This chain is Thymidylate kinase, found in Francisella tularensis subsp. novicida (strain U112).